Consider the following 985-residue polypeptide: Disease resistance protein At4g27190 (985 aa).

The stretch at 24–88 (ANAIKFKSNV…ISKARLKLEE (65 aa)) forms a coiled coil. An NB-ARC domain is found at 167 to 429 (IGVWGMGGVG…MAEGFMEELG (263 aa)). Position 171 to 178 (171 to 178 (GMGGVGKT)) interacts with ATP. LRR repeat units follow at residues 502–523 (SLRR…VEEF), 526–547 (KTSV…GFLQ), 551–572 (TLRI…SLLR), 575–597 (SLHS…ETLA), 598–620 (KLEL…EELK), and 621–643 (RFRH…VVSR).

Belongs to the disease resistance NB-LRR family.

In terms of biological role, disease resistance protein. The protein is Disease resistance protein At4g27190 of Arabidopsis thaliana (Mouse-ear cress).